Reading from the N-terminus, the 621-residue chain is GPI-anchor transamidase component GPAA1 (621 aa).

Residues 2–19 are Cytoplasmic-facing; sequence GLLSDPVRRRALARLVLR. The chain crosses the membrane as a helical span at residues 20–41; sequence LNAPLCVLSYVAGIAWFLALVF. Residues 42–370 lie on the Lumenal side of the membrane; the sequence is PPLTQRTYMS…LLPGLSRFVS (329 aa). 2 residues coordinate a 2-acyl-6-[6-phosphoethanolamine-alpha-D-mannosyl-(1-&gt;2)-6-phosphoethanolamine-alpha-D-mannosyl-(1-&gt;6)-2-phosphoethanolamine-alpha-D-mannosyl-(1-&gt;4)-alpha-D-glucosaminyl]-1-(1-radyl,2-acyl-sn-glycero-3-phospho)-1D-myo-inositol: tyrosine 49 and serine 51. Asparagine 203 carries an N-linked (GlcNAc...) asparagine glycan. The cysteines at positions 259 and 266 are disulfide-linked. Positions 354, 355, and 356 each coordinate a 2-acyl-6-[6-phosphoethanolamine-alpha-D-mannosyl-(1-&gt;2)-6-phosphoethanolamine-alpha-D-mannosyl-(1-&gt;6)-2-phosphoethanolamine-alpha-D-mannosyl-(1-&gt;4)-alpha-D-glucosaminyl]-1-(1-radyl,2-acyl-sn-glycero-3-phospho)-1D-myo-inositol. Glutamine 355 is a binding site for Mg(2+). The chain crosses the membrane as a helical span at residues 371–393; sequence IGLYMPAVGFLLLVLGLKALELW. Residues 394–425 are Cytoplasmic-facing; sequence MQLHEAGMGLEEPGGAPGPSVPLPPSQGVGLA. The helical transmembrane segment at 426–450 threads the bilayer; that stretch reads SLVAPLLISQAMGLALYVLPVLGQH. Over 451-462 the chain is Lumenal; the sequence is VATQHFPVAEAE. Residues 463–483 traverse the membrane as a helical segment; sequence AVVLTLLAIYAAGLALPHNTH. Residues 484–495 lie on the Cytoplasmic side of the membrane; sequence RVVSTQAPDRGW. 2 helical membrane passes run 496–519 and 520–536; these read MALK…TNFS and LGFL…ALAK. At 537–540 the chain is on the cytoplasmic side; sequence PHGP. The chain crosses the membrane as a helical span at residues 541–563; that stretch reads RTLYAALLVLTSPAATLLGSLFL. Over 564–597 the chain is Lumenal; the sequence is WRELQEAPLSLAEGWQLFLAALAQGVLEHHTYGA. A helical membrane pass occupies residues 598 to 619; it reads LLFPLLSLGLYPCWLLFWNVLF. The Cytoplasmic segment spans residues 620–621; sequence WK.

Heteropentamer. Part of the GPI-anchor transamidase complex, consisting of PIGK, PIGT, PIGS, PIGU and GAA1. Interacts with PIGK. Ubiquitously expressed in fetal and adult tissues. Expressed at higher levels in fetal tissues than adult tissues.

The protein localises to the endoplasmic reticulum membrane. It functions in the pathway glycolipid biosynthesis; glycosylphosphatidylinositol-anchor biosynthesis. Functionally, component of the glycosylphosphatidylinositol-anchor (GPI-anchor) transamidase (GPI-T) complex that catalyzes the formation of the linkage between a proprotein and a GPI-anchor and participates in GPI anchored protein biosynthesis. Binds GPI-anchor. This Homo sapiens (Human) protein is GPI-anchor transamidase component GPAA1.